The following is a 402-amino-acid chain: Type II NADH:quinone oxidoreductase (402 aa).

FAD contacts are provided by residues glycine 12–alanine 16, asparagine 39–lysine 40, and valine 83. The active site involves glutamate 172. FAD-binding positions include aspartate 302, alanine 319–glutamine 320, and lysine 379.

It belongs to the NADH dehydrogenase family. The cofactor is FAD.

It localises to the cell membrane. The enzyme catalyses a quinone + NADH + H(+) = a quinol + NAD(+). Its function is as follows. Alternative, nonproton pumping NADH:quinone oxidoreductase that delivers electrons to the respiratory chain by oxidation of NADH and reduction of quinones, and contributes to the regeneration of NAD(+). The chain is Type II NADH:quinone oxidoreductase from Staphylococcus epidermidis (strain ATCC 35984 / DSM 28319 / BCRC 17069 / CCUG 31568 / BM 3577 / RP62A).